The sequence spans 126 residues: uncharacterized protein (126 aa).

Disordered regions lie at residues 15–72 (PEWG…SDPQ) and 93–126 (TQIP…TTSN). Composition is skewed to basic and acidic residues over residues 29 to 46 (DPLD…RVPE) and 55 to 64 (VQEDSREHGQ).

This is an uncharacterized protein from Homo sapiens (Human).